A 205-amino-acid polypeptide reads, in one-letter code: Ypt/Rab-type GTPase ypt7 (205 aa).

Residues 17–23, 33–40, G66, 125–128, and 157–159 contribute to the GTP site; these read SGVGKTS, FSKDYKAT, NKVD, and SAK. An Effector region motif is present at residues 37-45; the sequence is YKATIGADF. Residues C203 and C205 are each lipidated (S-geranylgeranyl cysteine). The residue at position 205 (C205) is a Cysteine methyl ester.

This sequence belongs to the small GTPase superfamily. Rab family.

The protein localises to the vacuole membrane. Rab activation is generally mediated by a guanine exchange factor (GEF), while inactivation through hydrolysis of bound GTP is catalyzed by a GTPase activating protein (GAP). Functionally, ypt/Rab-type GTPases are key regulators of membrane trafficking and intracellular vesicular transport. They act as molecular switches that convert between GTP-bound and GDP-bound states, and regulate virtually all steps of membrane traffic from the formation of the transport vesicle at the donor membrane to its fusion at the target membrane. In the GDP-bound state, Ypt proteins are predominantly cytosolic, solubilized through the interaction with a GDP dissociation inhibitor (GDI). In the GTP-bound state, the proteins are membrane bound and interact with specific effector proteins that select cargo, promote vesicle movement, or verify the correct site of fusion. Ypt7 is necessary for trafficking from the endosome to the vacuole and for homotypic vacuole fusion. Plays an important role in sporulation. This is Ypt/Rab-type GTPase ypt7 (ypt7) from Schizosaccharomyces pombe (strain 972 / ATCC 24843) (Fission yeast).